A 120-amino-acid chain; its full sequence is Large ribosomal subunit protein bL20 (120 aa).

This sequence belongs to the bacterial ribosomal protein bL20 family.

Functionally, binds directly to 23S ribosomal RNA and is necessary for the in vitro assembly process of the 50S ribosomal subunit. It is not involved in the protein synthesizing functions of that subunit. In Pseudoalteromonas translucida (strain TAC 125), this protein is Large ribosomal subunit protein bL20.